Reading from the N-terminus, the 61-residue chain is Large ribosomal subunit protein uL30 (61 aa).

Belongs to the universal ribosomal protein uL30 family. In terms of assembly, part of the 50S ribosomal subunit.

This is Large ribosomal subunit protein uL30 from Acidithiobacillus ferrooxidans (strain ATCC 23270 / DSM 14882 / CIP 104768 / NCIMB 8455) (Ferrobacillus ferrooxidans (strain ATCC 23270)).